A 275-amino-acid polypeptide reads, in one-letter code: Formamidopyrimidine-DNA glycosylase (275 aa).

Residue proline 2 is the Schiff-base intermediate with DNA of the active site. Residue glutamate 3 is the Proton donor of the active site. Lysine 60 serves as the catalytic Proton donor; for beta-elimination activity. DNA contacts are provided by histidine 93 and arginine 112. The FPG-type zinc-finger motif lies at phenylalanine 240–lysine 274. Residue arginine 264 is the Proton donor; for delta-elimination activity of the active site.

Belongs to the FPG family. In terms of assembly, monomer. The cofactor is Zn(2+).

It catalyses the reaction Hydrolysis of DNA containing ring-opened 7-methylguanine residues, releasing 2,6-diamino-4-hydroxy-5-(N-methyl)formamidopyrimidine.. The enzyme catalyses 2'-deoxyribonucleotide-(2'-deoxyribose 5'-phosphate)-2'-deoxyribonucleotide-DNA = a 3'-end 2'-deoxyribonucleotide-(2,3-dehydro-2,3-deoxyribose 5'-phosphate)-DNA + a 5'-end 5'-phospho-2'-deoxyribonucleoside-DNA + H(+). In terms of biological role, involved in base excision repair of DNA damaged by oxidation or by mutagenic agents. Acts as a DNA glycosylase that recognizes and removes damaged bases. Has a preference for oxidized purines, such as 7,8-dihydro-8-oxoguanine (8-oxoG). Has AP (apurinic/apyrimidinic) lyase activity and introduces nicks in the DNA strand. Cleaves the DNA backbone by beta-delta elimination to generate a single-strand break at the site of the removed base with both 3'- and 5'-phosphates. This Bacillus licheniformis (strain ATCC 14580 / DSM 13 / JCM 2505 / CCUG 7422 / NBRC 12200 / NCIMB 9375 / NCTC 10341 / NRRL NRS-1264 / Gibson 46) protein is Formamidopyrimidine-DNA glycosylase.